Reading from the N-terminus, the 317-residue chain is Type II restriction enzyme NaeI (317 aa).

As to quaternary structure, homodimer.

The catalysed reaction is Endonucleolytic cleavage of DNA to give specific double-stranded fragments with terminal 5'-phosphates.. Functionally, an E and P subtype restriction enzyme that recognizes the double-stranded unmethylated sequence 5'-GCCGGC-3' and cleaves after C-3. This Lentzea aerocolonigenes (Lechevalieria aerocolonigenes) protein is Type II restriction enzyme NaeI.